Here is a 165-residue protein sequence, read N- to C-terminus: MSQQFKYVVRIFGQDVDGTMKLPYALAMVKGIGYNTAKAIIRKLGMDPNARLGELSDAEVKKVESVISDHTIKGLPSWLYNRRKDYESGLDLHLVTSDLIFYVRNDIEREKKSRSWRGVRHSLGLKVRGQRTRTTGRTGMTIGVARKKAAQPQSQQSSSQQQKSS.

The disordered stretch occupies residues 139–165 (GMTIGVARKKAAQPQSQQSSSQQQKSS). Positions 153-165 (QSQQSSSQQQKSS) are enriched in low complexity.

This sequence belongs to the universal ribosomal protein uS13 family. As to quaternary structure, part of the 30S ribosomal subunit. Forms a loose heterodimer with protein S19. Forms two bridges to the 50S subunit in the 70S ribosome.

Located at the top of the head of the 30S subunit, it contacts several helices of the 16S rRNA. In the 70S ribosome it contacts the 23S rRNA (bridge B1a) and protein L5 of the 50S subunit (bridge B1b), connecting the 2 subunits; these bridges are implicated in subunit movement. The sequence is that of Small ribosomal subunit protein uS13 from Saccharolobus solfataricus (strain ATCC 35092 / DSM 1617 / JCM 11322 / P2) (Sulfolobus solfataricus).